The chain runs to 128 residues: Small nuclear ribonucleoprotein associated homolog 13 (128 aa).

This sequence belongs to the eukaryotic ribosomal protein eL8 family.

The protein localises to the nucleus. The protein resides in the nucleolus. In terms of biological role, binds to the 5'-stem-loop of U4 snRNA and may play a role in the late stage of spliceosome assembly. The protein undergoes a conformational change upon RNA-binding. The chain is Small nuclear ribonucleoprotein associated homolog 13 from Caenorhabditis elegans.